The following is a 354-amino-acid chain: Guanine nucleotide-binding protein G(o) subunit alpha (354 aa).

Gly2 is lipidated: N-myristoyl glycine. A lipid anchor (S-palmitoyl cysteine) is attached at Cys3. Residues 32 to 354 (KDIKLLLLGA…ANNLRGCGLY (323 aa)) form the G-alpha domain. A G1 motif region spans residues 35 to 48 (KLLLLGAGESGKST). GTP-binding positions include 40–47 (GAGESGKS), 176–182 (LRTRVKT), 201–205 (DVGGQ), 270–273 (NKKD), and Ala326. Residues Ser47 and Thr182 each contribute to the Mg(2+) site. The segment at 174-182 (DILRTRVKT) is G2 motif. The G3 motif stretch occupies residues 197-206 (FKLFDVGGQR). The interval 266-273 (ILFLNKKD) is G4 motif. The tract at residues 324–329 (TCATDT) is G5 motif.

The protein belongs to the G-alpha family. G(i/o/t/z) subfamily. G proteins are composed of 3 units; alpha, beta and gamma. The alpha chain contains the guanine nucleotide binding site. Interacts (in GDP-bound form) with gpr-1; gpr-1 forms a complex with gpr-2 and lin-5. Interacts (in GDP-bound form) with gpb-1. Interacts (in GDP-bound form) with gbas-1 (via GBA motif); the interaction leads to activation of goa-1. In terms of tissue distribution, expressed in the ASER neuron and the intestine.

Functionally, guanine nucleotide-binding proteins (G proteins) are involved as modulators or transducers in various transmembrane signaling systems. In the 1-cell embryo, probably together with gpa-16, controls nuclear rotation and spindle elongation during mitosis. During the first embryonic cell divisions, plays a role in gpr-1/2 cortical localization and in the proper orientation of EMS blastomere mitotic spindle. Polarity determinants (par genes) may regulate lin-5/gpr-1/gpr-2/goa-1 locally to create the asymmetric forces that drive spindle movement. Involved in chemosensory responses to attractive and repellent odors detected by AWC and AWB sensory neurons, respectively. In ASER neurons, acts downstream of glr-3 to regulate cold avoidance behavior via calcium signaling, and it may also play a role in sensing cold in the intestine. Negatively regulates axon regeneration after injury downstream of the inhibitory compound arachidonoyl ethanolamide (AEA) by antagonizing the activation of the JNK pathway (mlk-1/mek-1/kgb-1). In neurons, may negatively regulate diacylglycerol (DAG) production mediated by egl-30 signaling cascade and thereby negatively regulates acetylcholine release. Couples to the muscarinic acetylcholine receptor gar-2 to negatively regulate cholinergic receptor activity in the presence of high levels of acetylcholine in ventral cord motor neurons. Plays a role in the navigational capacity of sperm and the targeting of sperm derived from males to the fertilization site in the uterus of hermaphrodites. Involved in egg-laying and in regulating dopamine-mediated locomotion. Most likely couples to the dopamine receptors dop-2 and dop-3 to positively regulate the dopamine-mediated suppression of crh-1/CREB1 transcription factor activation in cholinergic SIA neurons in the presence of food. This chain is Guanine nucleotide-binding protein G(o) subunit alpha, found in Caenorhabditis elegans.